The following is a 261-amino-acid chain: Putative hydro-lyase Nther_1142 (261 aa).

This sequence belongs to the D-glutamate cyclase family.

The protein is Putative hydro-lyase Nther_1142 of Natranaerobius thermophilus (strain ATCC BAA-1301 / DSM 18059 / JW/NM-WN-LF).